The primary structure comprises 364 residues: Phosphoserine aminotransferase (364 aa).

Arg41 lines the L-glutamate pocket. Residues 75 to 76 (AS), Trp100, Thr155, and Gln198 each bind pyridoxal 5'-phosphate. An N6-(pyridoxal phosphate)lysine modification is found at Lys199. Residue 239-240 (NT) coordinates pyridoxal 5'-phosphate.

The protein belongs to the class-V pyridoxal-phosphate-dependent aminotransferase family. SerC subfamily. As to quaternary structure, homodimer. Requires pyridoxal 5'-phosphate as cofactor.

Its subcellular location is the cytoplasm. It carries out the reaction O-phospho-L-serine + 2-oxoglutarate = 3-phosphooxypyruvate + L-glutamate. It catalyses the reaction 4-(phosphooxy)-L-threonine + 2-oxoglutarate = (R)-3-hydroxy-2-oxo-4-phosphooxybutanoate + L-glutamate. Its pathway is amino-acid biosynthesis; L-serine biosynthesis; L-serine from 3-phospho-D-glycerate: step 2/3. Its function is as follows. Catalyzes the reversible conversion of 3-phosphohydroxypyruvate to phosphoserine and of 3-hydroxy-2-oxo-4-phosphonooxybutanoate to phosphohydroxythreonine. The protein is Phosphoserine aminotransferase of Streptococcus thermophilus (strain ATCC BAA-250 / LMG 18311).